A 174-amino-acid polypeptide reads, in one-letter code: uncharacterized protein (174 aa).

This is an uncharacterized protein from Aquifex aeolicus (strain VF5).